Here is a 128-residue protein sequence, read N- to C-terminus: Small ribosomal subunit protein bS6 (128 aa).

This sequence belongs to the bacterial ribosomal protein bS6 family.

Functionally, binds together with bS18 to 16S ribosomal RNA. The sequence is that of Small ribosomal subunit protein bS6 from Geotalea uraniireducens (strain Rf4) (Geobacter uraniireducens).